Consider the following 702-residue polypeptide: A-type inclusion protein A25 homolog (702 aa).

The segment at 342 to 380 (TNTGIEEPHATGGDKEDQPIKVVHPPNNDKDDAIKSYNP) is disordered. Positions 347-360 (EEPHATGGDKEDQP) are enriched in basic and acidic residues. Coiled-coil stretches lie at residues 420 to 522 (NGGE…RDGK) and 548 to 692 (EIDK…NNKT).

Belongs to the poxviridae A25 protein family. Interacts (via N-terminus) with protein A26.

The protein localises to the virion. Functionally, structural protein that forms a matrix surrounding the mature virion (MV) through interaction with protein A26. Presence of protein A25 in the virion structurally prevents direct virus-cell fusion mechanism. The chain is A-type inclusion protein A25 homolog from Variola virus (isolate Human/India/Ind3/1967) (VARV).